We begin with the raw amino-acid sequence, 255 residues long: tRNA (guanine-N(1)-)-methyltransferase (255 aa).

S-adenosyl-L-methionine is bound by residues Gly-113 and 133-138 (IGDYVL).

The protein belongs to the RNA methyltransferase TrmD family. Homodimer.

Its subcellular location is the cytoplasm. The enzyme catalyses guanosine(37) in tRNA + S-adenosyl-L-methionine = N(1)-methylguanosine(37) in tRNA + S-adenosyl-L-homocysteine + H(+). Functionally, specifically methylates guanosine-37 in various tRNAs. The sequence is that of tRNA (guanine-N(1)-)-methyltransferase from Klebsiella pneumoniae subsp. pneumoniae (strain ATCC 700721 / MGH 78578).